The chain runs to 261 residues: MTHQTHAYHMVNPSPWPLTGALSALLMTSGLIMWFHFNSMTLLMLGLTTNMLTMYQWWRDIIRESTFQGHHTSAVQKGLRYGMILFIISEVLFFTGFFWAFYHSSLAPTPELGGCWPPTGIHPLNPLEVPLLNTSVLLASGVSITWAHHSLMEGNRNHMLQALFITIALGVYFTLLQASEYYEAPFTISDGVYGSTFFVATGFHGLHVIIGSTFLIVCFFRQLKFHFTSTHHFGFEAAAWYWHFVDVVWLFLYVSIYWWGS.

The Mitochondrial matrix segment spans residues 1–15; it reads MTHQTHAYHMVNPSP. A helical transmembrane segment spans residues 16-34; that stretch reads WPLTGALSALLMTSGLIMW. Residues 35–40 lie on the Mitochondrial intermembrane side of the membrane; sequence FHFNSM. The chain crosses the membrane as a helical span at residues 41 to 66; that stretch reads TLLMLGLTTNMLTMYQWWRDIIREST. The Mitochondrial matrix portion of the chain corresponds to 67–72; it reads FQGHHT. The helical transmembrane segment at 73–105 threads the bilayer; sequence SAVQKGLRYGMILFIISEVLFFTGFFWAFYHSS. Topologically, residues 106–128 are mitochondrial intermembrane; it reads LAPTPELGGCWPPTGIHPLNPLE. Residues 129 to 152 traverse the membrane as a helical segment; sequence VPLLNTSVLLASGVSITWAHHSLM. The Mitochondrial matrix segment spans residues 153-155; it reads EGN. A helical transmembrane segment spans residues 156 to 183; sequence RNHMLQALFITIALGVYFTLLQASEYYE. The Mitochondrial intermembrane segment spans residues 184 to 190; that stretch reads APFTISD. A helical membrane pass occupies residues 191-223; sequence GVYGSTFFVATGFHGLHVIIGSTFLIVCFFRQL. Residues 224–232 lie on the Mitochondrial matrix side of the membrane; the sequence is KFHFTSTHH. The helical transmembrane segment at 233 to 256 threads the bilayer; the sequence is FGFEAAAWYWHFVDVVWLFLYVSI. The Mitochondrial intermembrane segment spans residues 257 to 261; that stretch reads YWWGS.

The protein belongs to the cytochrome c oxidase subunit 3 family. As to quaternary structure, component of the cytochrome c oxidase (complex IV, CIV), a multisubunit enzyme composed of 14 subunits. The complex is composed of a catalytic core of 3 subunits MT-CO1, MT-CO2 and MT-CO3, encoded in the mitochondrial DNA, and 11 supernumerary subunits COX4I, COX5A, COX5B, COX6A, COX6B, COX6C, COX7A, COX7B, COX7C, COX8 and NDUFA4, which are encoded in the nuclear genome. The complex exists as a monomer or a dimer and forms supercomplexes (SCs) in the inner mitochondrial membrane with NADH-ubiquinone oxidoreductase (complex I, CI) and ubiquinol-cytochrome c oxidoreductase (cytochrome b-c1 complex, complex III, CIII), resulting in different assemblies (supercomplex SCI(1)III(2)IV(1) and megacomplex MCI(2)III(2)IV(2)).

The protein resides in the mitochondrion inner membrane. It catalyses the reaction 4 Fe(II)-[cytochrome c] + O2 + 8 H(+)(in) = 4 Fe(III)-[cytochrome c] + 2 H2O + 4 H(+)(out). Component of the cytochrome c oxidase, the last enzyme in the mitochondrial electron transport chain which drives oxidative phosphorylation. The respiratory chain contains 3 multisubunit complexes succinate dehydrogenase (complex II, CII), ubiquinol-cytochrome c oxidoreductase (cytochrome b-c1 complex, complex III, CIII) and cytochrome c oxidase (complex IV, CIV), that cooperate to transfer electrons derived from NADH and succinate to molecular oxygen, creating an electrochemical gradient over the inner membrane that drives transmembrane transport and the ATP synthase. Cytochrome c oxidase is the component of the respiratory chain that catalyzes the reduction of oxygen to water. Electrons originating from reduced cytochrome c in the intermembrane space (IMS) are transferred via the dinuclear copper A center (CU(A)) of subunit 2 and heme A of subunit 1 to the active site in subunit 1, a binuclear center (BNC) formed by heme A3 and copper B (CU(B)). The BNC reduces molecular oxygen to 2 water molecules using 4 electrons from cytochrome c in the IMS and 4 protons from the mitochondrial matrix. This Damaliscus lunatus (Tsessebe) protein is Cytochrome c oxidase subunit 3 (MT-CO3).